A 910-amino-acid polypeptide reads, in one-letter code: MDTNFKLSNCIGTVYRDGQVAFSKDGYSVISPIGNKLSIFDLRNNTSKTLDIDCNYNIKRLSISPSGYHLLASDERGVVHFVHLLSEFKIYTFRSNKPIGSLQWSPDATRVAICRENDLQIHEFGKSIENKVYNPFSLSRTYKLSSDSLKTIDWSDDANLLVSGGEDRVVRVVGAKDFKNLFIHPLASHKGYIVNCQFMKNSYDMITVCKRGLANVWTCNLRPGELVEGIWKKDEEGSDDIEMLEDGEQKVEKIFFEKTKKYWLSESSGSGKSVDVTAARFHKETNILATAFNNGVIVLHEIPSFALVHNLRVSEMRIQTVAWNLTGDWLAIGCGKGSTAQLVVWEWQSESYVMKQQAHSLRITTAEYSPDGSLMATGAEDGKVKIWNSRSSFCTVTFDEHTSGVTAVKWTQSGRAILSASLDGTVRAHDLKRYRNFRTLVCPEPTQLATLAVDKAGDLVIAGAKEVFNIYIWSFETGHLLDILSGHESAISSIDIHGNHIVSGSWDRTIKMWTIVDSQAETVEVSHEALDVKFSPAGDEIAVLTSDGVITFFEAKEMINLGSIDTKLDTDPARGSRDTITRQSAAKTKTFTRIRFSPDGNLLLAGGESNNFCLYSVPERMILKKWQITANRSLDGVILDFNRRNFTEFGNMQLVDTSDEEDELEPNNKMSIKLPGTKNFDLGERRARPEVNIYEVTYCPTGRRFAICSTEGVSVYSLDTISMFDPFQLDSQTNAEVIKRAVWNNDYSTAIMASLRLNNAQYITECLESTSISQIPLVASSLPLMYAERLLKWMVEGNVMSSTRHVHFYMIWLRAILQHHGMQLKGRADVATLTGIQQIVAHHQQHITKLANQNKFALNWLVKIRQSKKSVKKEEEEEEDVSDESDDEDIEDESAGSDDEDSDDSVEIIE.

14 WD repeats span residues 12–50 (GTVYRDGQVAFSKDGYSVISPIGNKLSIFDLRNNTSKTL), 53–92 (DCNYNIKRLSISPSGYHLLASDERGVVHFVHLLSEFKIYT), 94–134 (RSNK…KVYN), 144–183 (LSSDSLKTIDWSDDANLLVSGGEDRVVRVVGAKDFKNLFI), 188–227 (SHKGYIVNCQFMKNSYDMITVCKRGLANVWTCNLRPGELV), 271–310 (GKSVDVTAARFHKETNILATAFNNGVIVLHEIPSFALVHN), 313–355 (VSEM…YVMK), 358–397 (AHSLRITTAEYSPDGSLMATGAEDGKVKIWNSRSSFCTVT), 400–439 (EHTSGVTAVKWTQSGRAILSASLDGTVRAHDLKRYRNFRT), 443–485 (PEPT…DILS), 486–523 (GHESAISSIDIHGNHIVSGSWDRTIKMWTIVDSQAETV), 525–563 (VSHEALDVKFSPAGDEIAVLTSDGVITFFEAKEMINLGS), 586–625 (AKTKTFTRIRFSPDGNLLLAGGESNNFCLYSVPERMILKK), and 688–728 (RPEV…DPFQ). Residues 867–910 (SKKSVKKEEEEEEDVSDESDDEDIEDESAGSDDEDSDDSVEIIE) form a disordered region. Residues 875–910 (EEEEEDVSDESDDEDIEDESAGSDDEDSDDSVEIIE) are compositionally biased toward acidic residues.

This sequence belongs to the WD repeat PWP2 family.

The sequence is that of Periodic tryptophan protein 2 homolog from Caenorhabditis elegans.